We begin with the raw amino-acid sequence, 159 residues long: Ribosomal RNA large subunit methyltransferase H (159 aa).

Residues leucine 76, glycine 108, and 127-132 (FSKMTF) each bind S-adenosyl-L-methionine.

Belongs to the RNA methyltransferase RlmH family. Homodimer.

It localises to the cytoplasm. The enzyme catalyses pseudouridine(1915) in 23S rRNA + S-adenosyl-L-methionine = N(3)-methylpseudouridine(1915) in 23S rRNA + S-adenosyl-L-homocysteine + H(+). Its function is as follows. Specifically methylates the pseudouridine at position 1915 (m3Psi1915) in 23S rRNA. This chain is Ribosomal RNA large subunit methyltransferase H, found in Clostridium botulinum (strain Alaska E43 / Type E3).